Reading from the N-terminus, the 361-residue chain is G-protein coupled receptor 183 (361 aa).

At 1–31 (MDIQMANNFTPPSATPQGNDCDLYAHHSTAR) the chain is on the extracellular side. The chain crosses the membrane as a helical span at residues 32 to 57 (IVMPLHYSLVFIIGLVGNLLALVVIV). Residues 58–77 (QNRKKINSTTLYSTNLVISD) are Cytoplasmic-facing. A helical transmembrane segment spans residues 78 to 95 (ILFTTALPTRIAYYAMGF). Arg87 is a binding site for 7alpha,25-dihydroxycholesterol. Topologically, residues 96–105 (DWRIGDALCR) are extracellular. Cys104 and Cys181 are oxidised to a cystine. Residues 106–127 (ITALVFYINTYAGVNFMTCLSI) traverse the membrane as a helical segment. The 7alpha,25-dihydroxycholesterol site is built by Tyr112 and Tyr116. The interaction with G proteins stretch occupies residues 126–134 (SIDRFIAVV). Topologically, residues 128-149 (DRFIAVVHPLRYNKIKRIEHAK) are cytoplasmic. Residues 150–168 (GVCIFVWILVFAQTLPLLI) form a helical membrane-spanning segment. Topologically, residues 169–192 (NPMSKQEAERITCMEYPNFEETKS) are extracellular. Residues 193-215 (LPWILLGACFIGYVLPLIIILIC) traverse the membrane as a helical segment. Topologically, residues 216–241 (YSQICCKLFRTAKQNPLTEKSGVNKK) are cytoplasmic. Residues 242–265 (ALNTIILIIVVFVLCFTPYHVAII) form a helical membrane-spanning segment. 7alpha,25-dihydroxycholesterol is bound at residue Tyr260. Residues 266–287 (QHMIKKLRFSNFLECSQRHSFQ) lie on the Extracellular side of the membrane. Residues 288–312 (ISLHFTVCLMNFNCCMDPFIYFFAC) form a helical membrane-spanning segment. Topologically, residues 313-361 (KGYKRKVMRMLKRQVSVSISSAVKSAPEENSREMTETQMMIHSKSSNGK) are cytoplasmic. Ser328 carries the post-translational modification Phosphoserine. Residues 340–361 (EENSREMTETQMMIHSKSSNGK) form a disordered region. The segment covering 348–361 (ETQMMIHSKSSNGK) has biased composition (polar residues).

This sequence belongs to the G-protein coupled receptor 1 family. Homodimer and heterodimer. Heterodimerizes with CXCR5; leading to modulate the interaction between of CXCL13 and CXCR5. Expressed abundantly in lymphoid tissues such as spleen and lymph node, and in B- and T-lymphocytes. Also highly expressed in lung, heart and gastrointestinal tract, and weakly expressed in the urogenital system and brain. Expressed in astrocytes.

Its subcellular location is the cell membrane. Functionally, G-protein coupled receptor expressed in lymphocytes that acts as a chemotactic receptor for B-cells, T-cells, splenic dendritic cells, monocytes/macrophages and astrocytes. Receptor for oxysterol 7-alpha,25-dihydroxycholesterol (7-alpha,25-OHC) and other related oxysterols. Mediates cell positioning and movement of a number of cells by binding the 7-alpha,25-OHC ligand that forms a chemotactic gradient. Binding of 7-alpha,25-OHC mediates the correct localization of B-cells during humoral immune responses. Guides B-cell movement along the B-cell zone-T-cell zone boundary and later to interfollicular and outer follicular regions. Its specific expression during B-cell maturation helps position B-cells appropriately for mounting T-dependent antibody responses. Collaborates with CXCR5 to mediate B-cell migration; probably by forming a heterodimer with CXCR5 that affects the interaction between of CXCL13 and CXCR5. Also acts as a chemotactic receptor for some T-cells upon binding to 7-alpha,25-OHC ligand. Promotes follicular helper T (Tfh) cells differentiation by positioning activated T-cells at the follicle-T-zone interface, promoting contact of newly activated CD4 T-cells with activated dendritic cells and exposing them to Tfh-cell-promoting inducible costimulator (ICOS) ligand. Expression in splenic dendritic cells is required for their homeostasis, localization and ability to induce B- and T-cell responses: GPR183 acts as a chemotactic receptor in dendritic cells that mediates the accumulation of CD4(+) dendritic cells in bridging channels. Regulates migration of astrocytes and is involved in communication between astrocytes and macrophages. Promotes osteoclast precursor migration to bone surfaces. Signals constitutively through G(i)-alpha, but not G(s)-alpha or G(q)-alpha. Signals constitutively also via MAPK1/3 (ERK1/2). The polypeptide is G-protein coupled receptor 183 (Homo sapiens (Human)).